The primary structure comprises 2769 residues: Thyroglobulin (2769 aa).

The signal sequence occupies residues 1–19 (MALALWVFGLLDLICLASA). At tyrosine 24 the chain carries Iodotyrosine; alternate. Tyrosine 24 is modified (sulfotyrosine; alternate). At tyrosine 24 the chain carries Thyroxine; alternate. The residue at position 24 (tyrosine 24) is a Triiodothyronine; alternate. Thyroglobulin type-1 domains are found at residues 31-92 (LRPC…PAAC), 93-160 (LSFC…PARC), 161-297 (PRSC…RFRC), and 298-358 (PTKC…PPSC). 8 cysteine pairs are disulfide-bonded: cysteine 34–cysteine 52, cysteine 63–cysteine 70, cysteine 72–cysteine 92, cysteine 96–cysteine 120, cysteine 131–cysteine 138, cysteine 140–cysteine 160, cysteine 164–cysteine 183, and cysteine 194–cysteine 235. Tyrosine 108 is modified (iodotyrosine). N-linked (GlcNAc...) (complex) asparagine; alternate glycosylation occurs at asparagine 110. Asparagine 110 carries N-linked (GlcNAc...) (hybrid) asparagine; alternate glycosylation. Tyrosine 149 carries the iodotyrosine; alternate modification. Tyrosine 149 carries the diiodotyrosine; alternate modification. Iodotyrosine is present on residues tyrosine 234 and tyrosine 258. 9 cysteine pairs are disulfide-bonded: cysteine 301-cysteine 319, cysteine 330-cysteine 336, cysteine 338-cysteine 358, cysteine 364-cysteine 619, cysteine 408-cysteine 607, cysteine 630-cysteine 635, cysteine 637-cysteine 657, cysteine 661-cysteine 686, and cysteine 697-cysteine 702. N-linked (GlcNAc...) (complex) asparagine; alternate glycans are attached at residues asparagine 483 and asparagine 495. N-linked (GlcNAc...) (hybrid) asparagine; alternate glycans are attached at residues asparagine 483 and asparagine 495. 6 Thyroglobulin type-1 domains span residues 604–657 (SQGC…RPRC), 658–725 (PTEC…PKKC), 726–921 (PSPC…VPAC), 922–1073 (PGSC…IPQC), 1074–1145 (PTSC…SAQC), and 1146–1210 (PSLC…QPAC). At tyrosine 703 the chain carries Iodotyrosine; alternate. Tyrosine 703 bears the Thyroxine; alternate mark. Tyrosine 703 carries the triiodothyronine; alternate modification. Tyrosine 703 carries the diiodotyrosine; alternate modification. Disulfide bonds link cysteine 704–cysteine 725, cysteine 729–cysteine 762, cysteine 773–cysteine 898, cysteine 900–cysteine 921, cysteine 925–cysteine 1031, cysteine 1042–cysteine 1049, cysteine 1051–cysteine 1073, cysteine 1077–cysteine 1108, cysteine 1126–cysteine 1145, cysteine 1149–cysteine 1169, cysteine 1181–cysteine 1188, cysteine 1190–cysteine 1210, cysteine 1215–cysteine 1264, cysteine 1231–cysteine 1245, cysteine 1306–cysteine 1356, and cysteine 1331–cysteine 1347. Tyrosine 784 is modified (iodotyrosine). N-linked (GlcNAc...) (complex) asparagine; alternate glycosylation occurs at asparagine 853. The N-linked (GlcNAc...) (hybrid) asparagine; alternate glycan is linked to asparagine 853. The residue at position 866 (tyrosine 866) is an Iodotyrosine; alternate. Position 866 is a diiodotyrosine; alternate (tyrosine 866). Tyrosine 883 is modified (diiodotyrosine). An N-linked (GlcNAc...) (complex) asparagine; alternate glycan is attached at asparagine 947. Residue asparagine 947 is glycosylated (N-linked (GlcNAc...) (hybrid) asparagine; alternate). The residue at position 992 (tyrosine 992) is an Iodotyrosine; alternate. Tyrosine 992 carries the post-translational modification Diiodotyrosine; alternate. Asparagine 1140 carries N-linked (GlcNAc...) (complex) asparagine; alternate glycosylation. Residue asparagine 1140 is glycosylated (N-linked (GlcNAc...) (hybrid) asparagine; alternate). Residue tyrosine 1310 is modified to Iodotyrosine. At tyrosine 1310 the chain carries Thyroxine. N-linked (GlcNAc...) (high mannose) asparagine glycosylation occurs at asparagine 1365. 13 disulfide bridges follow: cysteine 1441/cysteine 1461, cysteine 1464/cysteine 1475, cysteine 1478/cysteine 1492, cysteine 1495/cysteine 1512, cysteine 1516/cysteine 1525, cysteine 1545/cysteine 1567, cysteine 1605/cysteine 1629, cysteine 1609/cysteine 1615, cysteine 1641/cysteine 1664, cysteine 1726/cysteine 1751, cysteine 1730/cysteine 1736, cysteine 1735/cysteine 1836, and cysteine 1762/cysteine 1779. Type II repeat units follow at residues 1458-1471 (ALGC…SYFQ), 1472-1488 (DEQC…EQAG), and 1489-1505 (SLAC…VYAG). Tyrosine 1469 is modified (iodotyrosine; alternate). Tyrosine 1469 carries the diiodotyrosine; alternate modification. The 55-residue stretch at 1513–1567 (VTDCQKNEVGLQCDQDSQYRASQRDRTSGKAFCVDGEGRRLPWTEAEAPLVDAQC) folds into the Thyroglobulin type-1 11 domain. One copy of the Type IIIA repeat lies at 1605-1725 (CLADCALDEA…GASLAEVHLF (121 aa)). Residues 1726–1893 (CLLACDHDSC…LFSLQQANLW (168 aa)) form a Type IIIB repeat. Residue asparagine 1776 is glycosylated (N-linked (GlcNAc...) (complex) asparagine; alternate). N-linked (GlcNAc...) (hybrid) asparagine; alternate glycosylation occurs at asparagine 1776. Basic and acidic residues predominate over residues 1827–1842 (MGSRSESMGCRRDTEP). A disordered region spans residues 1827-1851 (MGSRSESMGCRRDTEPRPASPSETD). An N-linked (GlcNAc...) (complex) asparagine; alternate glycan is attached at asparagine 1870. A glycan (N-linked (GlcNAc...) (hybrid) asparagine; alternate) is linked at asparagine 1870. 7 disulfides stabilise this stretch: cysteine 1894/cysteine 1920, cysteine 1898/cysteine 1905, cysteine 1929/cysteine 1940, cysteine 1997/cysteine 2025, cysteine 2001/cysteine 2007, cysteine 2006/cysteine 2077, and cysteine 2036/cysteine 2049. One copy of the Type IIIA repeat lies at 1894-1996 (CLSRCAGEPS…DKSISSGFFE (103 aa)). Residues 1997–2130 (CERLCDMDPC…VGNFSAARDR (134 aa)) form a Type IIIB repeat. Residue asparagine 2014 is glycosylated (N-linked (GlcNAc...) (high mannose) asparagine). N-linked (GlcNAc...) (high mannose) asparagine glycosylation is present at asparagine 2123. 3 disulfides stabilise this stretch: cysteine 2131–cysteine 2155, cysteine 2135–cysteine 2141, and cysteine 2164–cysteine 2173. One copy of the Type IIIA repeat lies at 2131–2188 (CLWECSRHQDCLVTTLQTQPGAVRCMFYADTQSCTHSLQAQNCRLLLHEEATYIYRKP). Position 2185 is an iodotyrosine (tyrosine 2185). Residues 2189-2769 (NIPLPGFGTS…PELASKTYSK (581 aa)) are cholinesterase-like (ChEL). N-linked (GlcNAc...) (complex) asparagine; alternate glycosylation is present at asparagine 2251. Asparagine 2251 carries an N-linked (GlcNAc...) (hybrid) asparagine; alternate glycan. A glycan (N-linked (GlcNAc...) (high mannose) asparagine) is linked at asparagine 2296. A disulfide bridge connects residues cysteine 2443 and cysteine 2454. Tyrosine 2541 is subject to Thyroxine. Iodotyrosine; alternate is present on tyrosine 2574. Tyrosine 2574 is modified (thyroxine; alternate). Position 2574 is a triiodothyronine; alternate (tyrosine 2574). Tyrosine 2574 carries the diiodotyrosine; alternate modification. Tyrosine 2588 and tyrosine 2618 each carry iodotyrosine. A disulfide bridge connects residues cysteine 2592 and cysteine 2716. Tyrosine 2698 carries the diiodotyrosine modification. Positions 2730–2769 (ADETKDGPSADSEEEDQPAGSGLTEDLLGLPELASKTYSK) are disordered. Iodotyrosine; alternate is present on tyrosine 2767. A Thyroxine; alternate modification is found at tyrosine 2767. Tyrosine 2767 bears the Triiodothyronine; alternate mark. Diiodotyrosine; alternate is present on tyrosine 2767.

Belongs to the type-B carboxylesterase/lipase family. As to quaternary structure, monomer. Homodimer (via ChEL region); occurs in the endoplasmic reticulum and is required for export to the Golgi apparatus. Homooligomer; disulfide-linked; stored in this form in the thyroid follicle lumen. In terms of processing, iodinated on tyrosine residues by TPO. There are 4 pairs of iodinated tyrosines used for coupling: acceptor Tyr-24 is coupled to donor Tyr-149 or Tyr-234, acceptor Tyr-2574 is coupled to donor Tyr-2541, acceptor Tyr-2767 in monomer 1 is coupled to donor Tyr-2767 in monomer 2 and acceptor Tyr-1310 in monomer 1 is coupled to donor Tyr-108 in monomer 2. Sulfated tyrosines are desulfated during iodination. Post-translationally, undergoes sequential proteolysis by cathepsins to release thyroxine (T4) and triiodothyronine (T3) hormones. In the thyroid follicle lumen, cross-linked TG (storage form) is solubilized by limited proteolysis mediated by cathepsins CTSB and/or CTSL. Partially cleaved TG is further processed by CTSK/cathepsin K and/or CTSL resulting in the release of T4. Following endocytosis, further processing occurs leading to the release of T3 and more T4 hormones. In terms of tissue distribution, specifically expressed in the thyroid gland.

The protein localises to the secreted. Its function is as follows. Acts as a substrate for the production of iodinated thyroid hormones thyroxine (T4) and triiodothyronine (T3). The synthesis of T3 and T4 involves iodination of selected tyrosine residues of TG/thyroglobulin followed by their oxidative coupling. Following TG re-internalization and lysosomal-mediated proteolysis, T3 and T4 are released from the polypeptide backbone leading to their secretion into the bloodstream. One dimer produces 7 thyroid hormone molecules. This chain is Thyroglobulin (TG), found in Bos taurus (Bovine).